The chain runs to 201 residues: Mediator of RNA polymerase II transcription subunit 22 (201 aa).

Residues 93-123 (SVNESINQRNQQLRTLREECDKKLIALRDDI) adopt a coiled-coil conformation. Residues 182–201 (SQIHTPPHLNGHGAGMTEHT) form a disordered region.

It belongs to the Mediator complex subunit 22 family. As to quaternary structure, component of the Mediator complex.

The protein resides in the nucleus. Functionally, component of the Mediator complex, a coactivator involved in the regulated transcription of nearly all RNA polymerase II-dependent genes. Mediator functions as a bridge to convey information from gene-specific regulatory proteins to the basal RNA polymerase II transcription machinery. Mediator is recruited to promoters by direct interactions with regulatory proteins and serves as a scaffold for the assembly of a functional preinitiation complex with RNA polymerase II and the general transcription factors. This chain is Mediator of RNA polymerase II transcription subunit 22 (med22), found in Xenopus laevis (African clawed frog).